The sequence spans 422 residues: Probable alpha-1,6-mannosyltransferase MNN11 (422 aa).

At 1-31 the chain is on the cytoplasmic side; the sequence is MAIKPRTKGKTYSSRSVGSQWFNRLGFKQNK. The helical; Signal-anchor for type II membrane protein transmembrane segment at 32–52 threads the bilayer; that stretch reads YGTCKFLSIITAFVFILYFFS. At 53 to 422 the chain is on the lumenal side; the sequence is NRFYPISRSA…GHMYQKIKKS (370 aa).

Belongs to the glycosyltransferase 34 family. As to quaternary structure, component of the M-Pol II complex composed of ANP1, MNN9, MNN10, MNN11 and HOC1.

It is found in the golgi apparatus. It localises to the cis-Golgi network membrane. In terms of biological role, required for synthesis of full-length mannan chains. Its function is as follows. The M-Pol II complex possesses alpha-1,6-mannosyltransferase activity and is probably involved in the elongation of the mannan backbone of N-linked glycans on cell wall and periplasmic proteins. This is Probable alpha-1,6-mannosyltransferase MNN11 (MNN11) from Saccharomyces cerevisiae (strain ATCC 204508 / S288c) (Baker's yeast).